A 602-amino-acid chain; its full sequence is uncharacterized protein (602 aa).

The region spanning 271-472 (IIDILADILI…RDEEVAKYIF (202 aa)) is the MCM domain. Position 315-322 (315-322 (TEVGIDKT)) interacts with ATP.

It belongs to the MCM family.

This is an uncharacterized protein from Methanocaldococcus jannaschii (strain ATCC 43067 / DSM 2661 / JAL-1 / JCM 10045 / NBRC 100440) (Methanococcus jannaschii).